The following is a 122-amino-acid chain: Large ribosomal subunit protein uL14c (122 aa).

The protein belongs to the universal ribosomal protein uL14 family. In terms of assembly, part of the 50S ribosomal subunit.

It is found in the plastid. The protein localises to the chloroplast. Binds to 23S rRNA. This is Large ribosomal subunit protein uL14c from Angiopteris evecta (Mule's foot fern).